The primary structure comprises 638 residues: 1-deoxy-D-xylulose-5-phosphate synthase (638 aa).

Thiamine diphosphate contacts are provided by residues His-79 and 120–122; that span reads GHS. Asp-151 lines the Mg(2+) pocket. Thiamine diphosphate is bound by residues 152 to 153, Asn-182, Tyr-291, and Glu-373; that span reads GA. Asn-182 contributes to the Mg(2+) binding site.

Belongs to the transketolase family. DXPS subfamily. In terms of assembly, homodimer. Mg(2+) is required as a cofactor. Requires thiamine diphosphate as cofactor.

It carries out the reaction D-glyceraldehyde 3-phosphate + pyruvate + H(+) = 1-deoxy-D-xylulose 5-phosphate + CO2. Its pathway is metabolic intermediate biosynthesis; 1-deoxy-D-xylulose 5-phosphate biosynthesis; 1-deoxy-D-xylulose 5-phosphate from D-glyceraldehyde 3-phosphate and pyruvate: step 1/1. Functionally, catalyzes the acyloin condensation reaction between C atoms 2 and 3 of pyruvate and glyceraldehyde 3-phosphate to yield 1-deoxy-D-xylulose-5-phosphate (DXP). This Xanthomonas oryzae pv. oryzae (strain MAFF 311018) protein is 1-deoxy-D-xylulose-5-phosphate synthase.